Consider the following 444-residue polypeptide: Xylose isomerase (444 aa).

Catalysis depends on residues His101 and Asp104. Residues Glu232, Glu268, His271, Asp296, Asp307, Asp309, and Asp339 each contribute to the Mg(2+) site.

Belongs to the xylose isomerase family. In terms of assembly, homotetramer. The cofactor is Mg(2+).

It localises to the cytoplasm. The catalysed reaction is alpha-D-xylose = alpha-D-xylulofuranose. The polypeptide is Xylose isomerase (Thermotoga maritima (strain ATCC 43589 / DSM 3109 / JCM 10099 / NBRC 100826 / MSB8)).